Consider the following 320-residue polypeptide: Cytochrome c biogenesis protein CcsA (320 aa).

The next 7 membrane-spanning stretches (helical) occupy residues 13–33 (ISFS…FLLV), 46–66 (GMIV…IYSG), 73–93 (LYES…VSYL), 147–167 (MVLG…LLVI), 226–246 (IISL…VWAN), 259–274 (ETWA…IYFH), and 289–309 (VASM…LLGI).

The protein belongs to the CcmF/CycK/Ccl1/NrfE/CcsA family. May interact with Ccs1.

The protein localises to the plastid. It localises to the chloroplast thylakoid membrane. Required during biogenesis of c-type cytochromes (cytochrome c6 and cytochrome f) at the step of heme attachment. The protein is Cytochrome c biogenesis protein CcsA of Gossypium barbadense (Sea Island cotton).